The primary structure comprises 335 residues: NADH-quinone oxidoreductase subunit H (335 aa).

8 consecutive transmembrane segments (helical) span residues 11-31 (VIIS…AGAL), 81-101 (VIFT…FAVI), 114-134 (IGLL…LFAG), 154-174 (VSYE…VGSF), 187-207 (LWFI…GVAV), 238-258 (FFVG…TLFF), 270-290 (QLAF…FILL), and 309-329 (FCLP…LLNT).

The protein belongs to the complex I subunit 1 family. In terms of assembly, NDH-1 is composed of 13 different subunits. Subunits NuoA, H, J, K, L, M, N constitute the membrane sector of the complex.

The protein localises to the cell inner membrane. It carries out the reaction a quinone + NADH + 5 H(+)(in) = a quinol + NAD(+) + 4 H(+)(out). NDH-1 shuttles electrons from NADH, via FMN and iron-sulfur (Fe-S) centers, to quinones in the respiratory chain. The immediate electron acceptor for the enzyme in this species is believed to be ubiquinone. Couples the redox reaction to proton translocation (for every two electrons transferred, four hydrogen ions are translocated across the cytoplasmic membrane), and thus conserves the redox energy in a proton gradient. This subunit may bind ubiquinone. This chain is NADH-quinone oxidoreductase subunit H, found in Pseudomonas fluorescens (strain SBW25).